The chain runs to 255 residues: Proteasome subunit alpha (255 aa).

The interval 224-255 (RLEELLGERGPAQHAPEEPADPEPEPPIAPPG) is disordered.

Belongs to the peptidase T1A family. In terms of assembly, the 20S proteasome core is composed of 14 alpha and 14 beta subunits that assemble into four stacked heptameric rings, resulting in a barrel-shaped structure. The two inner rings, each composed of seven catalytic beta subunits, are sandwiched by two outer rings, each composed of seven alpha subunits. The catalytic chamber with the active sites is on the inside of the barrel. Has a gated structure, the ends of the cylinder being occluded by the N-termini of the alpha-subunits. Is capped by the proteasome-associated ATPase, ARC.

The protein resides in the cytoplasm. It functions in the pathway protein degradation; proteasomal Pup-dependent pathway. With respect to regulation, the formation of the proteasomal ATPase ARC-20S proteasome complex, likely via the docking of the C-termini of ARC into the intersubunit pockets in the alpha-rings, may trigger opening of the gate for substrate entry. Interconversion between the open-gate and close-gate conformations leads to a dynamic regulation of the 20S proteasome proteolysis activity. Component of the proteasome core, a large protease complex with broad specificity involved in protein degradation. The polypeptide is Proteasome subunit alpha (Nocardioides sp. (strain ATCC BAA-499 / JS614)).